The sequence spans 410 residues: Thyroid hormone receptor alpha (410 aa).

Positions 1–32 (MEQKPSKVECGSDPEESSTRSPDGKRKRKNGQ) are disordered. The modulating stretch occupies residues 1-52 (MEQKPSKVECGSDPEESSTRSPDGKRKRKNGQCSLKTSMSGYIPSYLDKDEQ). Zn(2+) is bound by residues Cys-53, Cys-56, Cys-70, Cys-73, Cys-91, Cys-97, Cys-107, and Cys-110. 2 consecutive NR C4-type zinc fingers follow at residues 53–73 (CVVC…CEGC) and 91–115 (CKYD…FKKC). A DNA-binding region (nuclear receptor) is located at residues 53 to 127 (CVVCGDKATG…VGMAMDLVLD (75 aa)). Residues 163-407 (EEWDLIHVAT…PPLFLEVFED (245 aa)) enclose the NR LBD domain. Residues Arg-228 and Ser-277 each coordinate 3,3',5-triiodo-L-thyronine.

This sequence belongs to the nuclear hormone receptor family. NR1 subfamily. As to quaternary structure, binds DNA as a dimer; homodimer and heterodimer with RXRB. Interacts with NCOA3 and NCOA6 coactivators, leading to a strong increase of transcription of target genes. Probably interacts with SFPQ. Interacts with C1D. Interacts with AKAP13. Interacts with TP53INP2. Interacts with PER2. Interacts with TACC1. The interaction with isoform alpha-1, but not alpha-2, is decreased in the presence of thyroid hormone T3.

The protein localises to the nucleus. The protein resides in the cytoplasm. Nuclear hormone receptor that can act as a repressor or activator of transcription. High affinity receptor for thyroid hormones, including triiodothyronine and thyroxine. This chain is Thyroid hormone receptor alpha (THRA), found in Ovis aries (Sheep).